The chain runs to 80 residues: Acyl carrier protein (80 aa).

Residues 4–79 enclose the Carrier domain; the sequence is DEIFSKVRSI…DVVNFIKKRK (76 aa). Ser39 carries the post-translational modification O-(pantetheine 4'-phosphoryl)serine.

It belongs to the acyl carrier protein (ACP) family. Post-translationally, 4'-phosphopantetheine is transferred from CoA to a specific serine of apo-ACP by AcpS. This modification is essential for activity because fatty acids are bound in thioester linkage to the sulfhydryl of the prosthetic group.

It is found in the cytoplasm. It participates in lipid metabolism; fatty acid biosynthesis. In terms of biological role, carrier of the growing fatty acid chain in fatty acid biosynthesis. This is Acyl carrier protein from Borreliella burgdorferi (strain ATCC 35210 / DSM 4680 / CIP 102532 / B31) (Borrelia burgdorferi).